The chain runs to 62 residues: Ribulose bisphosphate carboxylase/oxygenase activase, chloroplastic (62 aa).

Belongs to the RuBisCO activase family.

It localises to the plastid. It is found in the chloroplast stroma. Its function is as follows. Activation of RuBisCO (ribulose-1,5-bisphosphate carboxylase/oxygenase; EC 4.1.1.39) involves the ATP-dependent carboxylation of the epsilon-amino group of lysine leading to a carbamate structure. This is Ribulose bisphosphate carboxylase/oxygenase activase, chloroplastic from Vitis sp. (Grape).